Consider the following 130-residue polypeptide: Small ribosomal subunit protein uS9 (130 aa).

It belongs to the universal ribosomal protein uS9 family.

The chain is Small ribosomal subunit protein uS9 from Xylella fastidiosa (strain 9a5c).